The primary structure comprises 614 residues: Leucine-rich repeat protein soc-2 homolog (614 aa).

Disordered regions lie at residues 1–29 (MNLCSSAGATASTSSLSSSGHVESNSSGP) and 44–79 (NSGGSGRADTALNQSNRSTVNGGGGNPTNSNGPNLT). LRR repeat units lie at residues 134–155 (GIKRLDLSKSSITVLPNTVREC), 157–178 (HLTELYLYSNKIGQLPTEIGCL), 180–201 (NLRNLALNENSLTSLPESLKHC), 203–224 (QLKVLDLRHNKLAEIPSVIYRL), 226–247 (SLTTLYLRFNRITAVADDLRQL), 249–270 (NLTMLSLRENKIKELGSAIGAL), 272–293 (NLTTLDVSHNHLEHLPDDIGNC), 295–316 (NLSALDLQHNELLDIPDSIGNL), 318–340 (SLVRLGLRYNRLNSVPISLKNCK), 341–362 (SMDEFNVEGNGITQLPDGMLAS), 365–386 (ALTTITLSRNQFTSYPTGGPAQ), 389–410 (NVYSINLEHNRIDKIPYGIFSR), 413–434 (GLTKLNMKENMLTALPLDVGTW), 436–457 (NMVELNLATNALQKLPDDIMNL), 459–480 (NLEILILSNNMLKKIPNTIGNL), 482–503 (KLRILDLEENRIEVLPHEIGLL), 505–526 (ELQRLILQTNQITMLPRSIGHL), 528–549 (NLTHLSVSENNLQFLPEEIGSL), 551–573 (SLENLYINQNPGLEKLPFELALC), and 575–596 (NLKYLNIDKCPLGTIPPEIQAG).

This sequence belongs to the SHOC2 family.

In terms of biological role, acts as a Ras effector and participates in MAPK pathway activation. Probably acts as a regulatory subunit of protein phosphatase that specifically dephosphorylates Raf kinase and stimulate Raf activity at specialized signaling complexes upon Ras activation. The protein is Leucine-rich repeat protein soc-2 homolog (Sur-8) of Drosophila virilis (Fruit fly).